The sequence spans 94 residues: Large ribosomal subunit protein bL25 (94 aa).

The protein belongs to the bacterial ribosomal protein bL25 family. As to quaternary structure, part of the 50S ribosomal subunit; part of the 5S rRNA/L5/L18/L25 subcomplex. Contacts the 5S rRNA. Binds to the 5S rRNA independently of L5 and L18.

In terms of biological role, this is one of the proteins that binds to the 5S RNA in the ribosome where it forms part of the central protuberance. This is Large ribosomal subunit protein bL25 from Erwinia tasmaniensis (strain DSM 17950 / CFBP 7177 / CIP 109463 / NCPPB 4357 / Et1/99).